The following is a 638-amino-acid chain: Sodium- and chloride-dependent glycine transporter 1 (638 aa).

The interval 1–30 (MAVAHGPVATSSPEQNGAVPSEATKKDQNL) is disordered. At 1–40 (MAVAHGPVATSSPEQNGAVPSEATKKDQNLTRGNWGNQIE) the chain is on the cytoplasmic side. 3 helical membrane-spanning segments follow: residues 41–61 (FVLT…FPYL), 68–88 (GAFM…LFFM), and 120–140 (VSTY…YYFF). The Extracellular segment spans residues 141–217 (SSMTHVLPWA…LSDDIGDFGE (77 aa)). N-linked (GlcNAc...) asparagine glycans are attached at residues Asn169, Asn172, Asn182, and Asn188. 9 helical membrane passes run 218–238 (VRLP…LCLI), 247–267 (VVYF…VRGV), 292–312 (VWGD…GGLI), 339–359 (SVYA…HLGV), 382–402 (LLPI…LLGL), 438–458 (VAGF…WLLL), 462–482 (YAAS…IMYI), 502–522 (LFFQ…ILIF), and 542–562 (VAIG…YALF). Topologically, residues 563–638 (QLCRTDGDTL…GSSRLQDSRI (76 aa)) are cytoplasmic. Position 603 is a phosphothreonine (Thr603). Phosphoserine occurs at positions 605 and 630. Residues 627 to 638 (SNGSSRLQDSRI) are essential for interaction with EXOC1.

Belongs to the sodium:neurotransmitter symporter (SNF) (TC 2.A.22) family. SLC6A9 subfamily. As to quaternary structure, interacts with EXOC1; interaction increases the transporter capacity of SLC6A9 probably by promoting its insertion into the cell membrane. Interacts with EXOC3 and EXOC4. As to expression, found only in the white matter of the CNS. Found in the gray matter of CNS as well as in macrophages and mast cells in peripheral tissues.

The protein resides in the cell membrane. It catalyses the reaction glycine(out) + chloride(out) + 2 Na(+)(out) = glycine(in) + chloride(in) + 2 Na(+)(in). With respect to regulation, inhibited by sarcosine. In terms of biological role, sodium- and chloride-dependent glycine transporter. Essential for regulating glycine concentrations at inhibitory glycinergic synapses. The sequence is that of Sodium- and chloride-dependent glycine transporter 1 (Slc6a9) from Rattus norvegicus (Rat).